The following is an 83-amino-acid chain: High-potential iron-sulfur protein (83 aa).

Positions 43, 46, 61, and 75 each coordinate [4Fe-4S] cluster.

The protein belongs to the high-potential iron-sulfur protein (HiPIP) family. As to quaternary structure, homodimer.

Its subcellular location is the periplasm. Specific class of high-redox-potential 4Fe-4S ferredoxins. Functions in anaerobic electron transport in most purple and in some other photosynthetic bacteria and in at least one genus (Paracoccus) of halophilic, denitrifying bacteria. The protein is High-potential iron-sulfur protein (hip) of Marichromatium gracile (Chromatium gracile).